Here is an 884-residue protein sequence, read N- to C-terminus: Valine--tRNA ligase (884 aa).

Residues 43–53 (PNVTGSLHIGH) carry the 'HIGH' region motif. A 'KMSKS' region motif is present at residues 530 to 534 (KMSKS). Residue Lys533 coordinates ATP. Positions 817 to 884 (VIDLDAERGR…KLKAALERLM (68 aa)) form a coiled coil.

The protein belongs to the class-I aminoacyl-tRNA synthetase family. ValS type 1 subfamily. As to quaternary structure, monomer.

Its subcellular location is the cytoplasm. It catalyses the reaction tRNA(Val) + L-valine + ATP = L-valyl-tRNA(Val) + AMP + diphosphate. Catalyzes the attachment of valine to tRNA(Val). As ValRS can inadvertently accommodate and process structurally similar amino acids such as threonine, to avoid such errors, it has a 'posttransfer' editing activity that hydrolyzes mischarged Thr-tRNA(Val) in a tRNA-dependent manner. The polypeptide is Valine--tRNA ligase (Zymomonas mobilis subsp. mobilis (strain ATCC 31821 / ZM4 / CP4)).